The sequence spans 542 residues: MFS thioclapurine efflux transporter tcpA (542 aa).

Basic and acidic residues predominate over residues 1 to 10 (MATVGTEEKN). A disordered region spans residues 1–24 (MATVGTEEKNPIGSASNTAEPNVT). Positions 13–24 (GSASNTAEPNVT) are enriched in polar residues. An N-linked (GlcNAc...) asparagine glycan is attached at asparagine 22. 3 helical membrane-spanning segments follow: residues 32–52 (SGFKLTIIVISLCLSLFLCGL), 75–97 (GWYTTAYLLTTSSFQIAYGKLYT), and 103–123 (MILLMALAIFELGSIICAAAP). Asparagine 124 carries N-linked (GlcNAc...) asparagine glycosylation. Transmembrane regions (helical) follow at residues 133–153 (AIAGLGAAGIFPGSTLVLVHA), 161–181 (ALLGITTGMFGIASLCGPFIG), 193–213 (CFIINVPLGVITAVIVTFFVF), 234–254 (IPEILVLVAALVCLVLGLQWG), 265–285 (IIALLVVFAVLTTAFLVLQVL), and 307–327 (IFALCSSGAMFIAVTYLPIYF). Asparagine 332 carries N-linked (GlcNAc...) asparagine glycosylation. The chain crosses the membrane as a helical span at residues 339-359 (GVNVMPLILGFLVMSIISGVI). A glycan (N-linked (GlcNAc...) asparagine) is linked at asparagine 361. A run of 4 helical transmembrane segments spans residues 370–390 (MFLCTILASVGAGLVSTFDVG), 396–416 (WIGYQALLGFGIGFGLQQPIV), 427–447 (VPFGVAFINMMQMLGGAIFVA), and 500–520 (VLGQVFLIATGLCVGTLLGSL).

Belongs to the major facilitator superfamily.

It is found in the cell membrane. In terms of biological role, MFS efflux transporter probably involved in thioclapurine export. This is MFS thioclapurine efflux transporter tcpA from Claviceps purpurea (strain 20.1) (Ergot fungus).